Reading from the N-terminus, the 435-residue chain is Tyrosine-protein phosphatase non-receptor type 1 (435 aa).

M1 carries the post-translational modification N-acetylmethionine. The Tyrosine-protein phosphatase domain occupies 3-277 (MEKEFEQIDK…RFSYLAVIEG (275 aa)). Phosphotyrosine is present on Y20. At S50 the chain carries Phosphoserine; by PKB/AKT1, CLK1 and CLK2. Y66 carries the phosphotyrosine; by EGFR modification. Substrate is bound by residues D181 and 215-221 (CSAGIGR). The active-site Phosphocysteine intermediate is the C215. C215 carries the post-translational modification Cysteine persulfide; alternate. At C215 the chain carries Cysteine sulfenic acid (-SOH); alternate. C215 is modified (cysteine sulfinic acid (-SO2H); alternate). C215 is modified (S-nitrosocysteine; in reversibly inhibited form). The segment at residues 215-216 (CS) is a cross-link (n,N-(cysteine-1,S-diyl)serine (Cys-Ser); in inhibited form). 2 positions are modified to phosphoserine; by CLK1 and CLK2: S242 and S243. A substrate-binding site is contributed by Q262. Residues 338–351 (TQEDKDCPIKEEKG) are compositionally biased toward basic and acidic residues. A disordered region spans residues 338-359 (TQEDKDCPIKEEKGSPLNAAPY). S352, S363, and S365 each carry phosphoserine. At T368 the chain carries Phosphothreonine. A Phosphoserine; by PKC modification is found at S378. Residues 378 to 398 (SLRGAQAASPAKGEPSLPEKD) are disordered. S386 is subject to Phosphoserine; by CDK1.

It belongs to the protein-tyrosine phosphatase family. Non-receptor class 1 subfamily. As to quaternary structure, interacts with EPHA3 (phosphorylated); dephosphorylates EPHA3 and may regulate its trafficking and function. Interacts with MET. Interacts with NCK1. Post-translationally, oxidized on Cys-215; the Cys-SOH formed in response to redox signaling reacts with the alpha-amido of the following residue to form a sulfenamide cross-link, triggering a conformational change that inhibits substrate binding and activity. The active site can be restored by reduction. In terms of processing, ser-50 is the major site of phosphorylation as compared to Ser-242 and Ser-243. Activated by phosphorylation at Ser-50. S-nitrosylation of Cys-215 inactivates the enzyme activity. Post-translationally, sulfhydration at Cys-215 following endoplasmic reticulum stress inactivates the enzyme activity, promoting EIF2AK3/PERK activity. As to expression, expressed in keratinocytes (at protein level).

The protein localises to the endoplasmic reticulum membrane. The catalysed reaction is O-phospho-L-tyrosyl-[protein] + H2O = L-tyrosyl-[protein] + phosphate. Its function is as follows. Tyrosine-protein phosphatase which acts as a regulator of endoplasmic reticulum unfolded protein response. Mediates dephosphorylation of EIF2AK3/PERK; inactivating the protein kinase activity of EIF2AK3/PERK. May play an important role in CKII- and p60c-src-induced signal transduction cascades. May regulate the EFNA5-EPHA3 signaling pathway which modulates cell reorganization and cell-cell repulsion. May also regulate the hepatocyte growth factor receptor signaling pathway through dephosphorylation of MET. The protein is Tyrosine-protein phosphatase non-receptor type 1 (PTPN1) of Homo sapiens (Human).